The primary structure comprises 421 residues: Serine--tRNA ligase (421 aa).

230–232 (TAE) contributes to the L-serine binding site. 259–261 (RRE) serves as a coordination point for ATP. Residue E282 participates in L-serine binding. Residue 346 to 349 (EISS) coordinates ATP. Position 381 (S381) interacts with L-serine.

Belongs to the class-II aminoacyl-tRNA synthetase family. Type-1 seryl-tRNA synthetase subfamily. In terms of assembly, homodimer. The tRNA molecule binds across the dimer.

It localises to the cytoplasm. It carries out the reaction tRNA(Ser) + L-serine + ATP = L-seryl-tRNA(Ser) + AMP + diphosphate + H(+). The enzyme catalyses tRNA(Sec) + L-serine + ATP = L-seryl-tRNA(Sec) + AMP + diphosphate + H(+). The protein operates within aminoacyl-tRNA biosynthesis; selenocysteinyl-tRNA(Sec) biosynthesis; L-seryl-tRNA(Sec) from L-serine and tRNA(Sec): step 1/1. Functionally, catalyzes the attachment of serine to tRNA(Ser). Is also able to aminoacylate tRNA(Sec) with serine, to form the misacylated tRNA L-seryl-tRNA(Sec), which will be further converted into selenocysteinyl-tRNA(Sec). This is Serine--tRNA ligase from Acidithiobacillus ferrooxidans (strain ATCC 23270 / DSM 14882 / CIP 104768 / NCIMB 8455) (Ferrobacillus ferrooxidans (strain ATCC 23270)).